The primary structure comprises 192 residues: Acetyltransferase PA3944 (192 aa).

The N-acetyltransferase domain occupies 18-187 (LLLRAWRDSD…RHILYRVDAA (170 aa)). Residues 105-107 (WRL), G113, N145, and 150-152 (GLM) each bind CoA.

Catalyzes the transfer of an acetyl group from acetyl coenzyme A (AcCoA) to an acceptor substrate and releases both CoA and the acetylated product. It prefers the peptide Asp-Phe methyl ester (or aspartame) and the peptide antibiotics polymyxin B and colistin. Other substrates like dopamine, serotonin, puromycin, chloramphenicol, D-glucosamine, glycine and N-alpha-acetyl-L-glutamine are used and displayed lower activity. The polypeptide is Acetyltransferase PA3944 (Pseudomonas aeruginosa (strain ATCC 15692 / DSM 22644 / CIP 104116 / JCM 14847 / LMG 12228 / 1C / PRS 101 / PAO1)).